The chain runs to 370 residues: Integrin-linked kinase-associated serine/threonine phosphatase 2C (370 aa).

An N-acetylmethionine modification is found at methionine 1. The tract at residues 1–69 (MDLFGDLPEP…SDEEKNGSEE (69 aa)) is disordered. Serine 13 bears the Phosphoserine mark. Residues 33–45 (SSGDSGSLDTSLS) are compositionally biased toward low complexity. Over residues 46–69 (EEVKNEGKGAKRKASDEEKNGSEE) the composition is skewed to basic and acidic residues. The 283-residue stretch at 86–368 (KGYVAERKGE…DNVTVMVVRI (283 aa)) folds into the PPM-type phosphatase domain. The Mn(2+) site is built by aspartate 130 and glycine 131. An N6-acetyllysine modification is found at lysine 188. Mn(2+)-binding residues include aspartate 304 and aspartate 359.

This sequence belongs to the PP2C family. Interacts with ILK. Mg(2+) serves as cofactor. Mn(2+) is required as a cofactor.

The protein resides in the cytoplasm. It catalyses the reaction O-phospho-L-seryl-[protein] + H2O = L-seryl-[protein] + phosphate. The enzyme catalyses O-phospho-L-threonyl-[protein] + H2O = L-threonyl-[protein] + phosphate. Functionally, protein phosphatase that may play a role in regulation of cell cycle progression via dephosphorylation of its substrates whose appropriate phosphorylation states might be crucial for cell proliferation. Selectively associates with integrin linked kinase (ILK), to modulate cell adhesion and growth factor signaling. Inhibits the ILK-GSK3B signaling axis and may play an important role in inhibiting oncogenic transformation. The sequence is that of Integrin-linked kinase-associated serine/threonine phosphatase 2C (ILKAP) from Bos taurus (Bovine).